Consider the following 428-residue polypeptide: Peptidase B (428 aa).

K195 and D200 together coordinate Mn(2+). The active site involves K207. The Mn(2+) site is built by D218, D277, and E279. R281 is a catalytic residue.

Belongs to the peptidase M17 family. In terms of assembly, homohexamer. The cofactor is Mn(2+).

It localises to the cytoplasm. It catalyses the reaction Release of an N-terminal amino acid, Xaa, from a peptide or arylamide. Xaa is preferably Glu or Asp but may be other amino acids, including Leu, Met, His, Cys and Gln.. Its function is as follows. Probably plays an important role in intracellular peptide degradation. This chain is Peptidase B, found in Klebsiella pneumoniae (strain 342).